A 124-amino-acid chain; its full sequence is uncharacterized protein (124 aa).

The tract at residues 1-65 (MAENSRYVRL…RPASSSNPDY (65 aa)) is disordered. A compositionally biased stretch (polar residues) spans 37–47 (LNSNDAESQQV).

This is an uncharacterized protein from Microplitis demolitor (Parasitoid wasp).